Consider the following 481-residue polypeptide: Protein nucleotidyltransferase YdiU (481 aa).

ATP is bound by residues G87, G89, R90, K110, D122, G123, R173, and R180. The active-site Proton acceptor is the D249. Positions 250 and 259 each coordinate Mg(2+). D259 is a binding site for ATP.

This sequence belongs to the SELO family. Mg(2+) is required as a cofactor. Requires Mn(2+) as cofactor.

The enzyme catalyses L-seryl-[protein] + ATP = 3-O-(5'-adenylyl)-L-seryl-[protein] + diphosphate. The catalysed reaction is L-threonyl-[protein] + ATP = 3-O-(5'-adenylyl)-L-threonyl-[protein] + diphosphate. It carries out the reaction L-tyrosyl-[protein] + ATP = O-(5'-adenylyl)-L-tyrosyl-[protein] + diphosphate. It catalyses the reaction L-histidyl-[protein] + UTP = N(tele)-(5'-uridylyl)-L-histidyl-[protein] + diphosphate. The enzyme catalyses L-seryl-[protein] + UTP = O-(5'-uridylyl)-L-seryl-[protein] + diphosphate. The catalysed reaction is L-tyrosyl-[protein] + UTP = O-(5'-uridylyl)-L-tyrosyl-[protein] + diphosphate. In terms of biological role, nucleotidyltransferase involved in the post-translational modification of proteins. It can catalyze the addition of adenosine monophosphate (AMP) or uridine monophosphate (UMP) to a protein, resulting in modifications known as AMPylation and UMPylation. In Mycobacterium sp. (strain KMS), this protein is Protein nucleotidyltransferase YdiU.